Reading from the N-terminus, the 409-residue chain is TNF receptor-associated factor 1 (409 aa).

Serine 139 is subject to Phosphoserine. The stretch at glutamate 167–alanine 256 forms a coiled coil. Residues lysine 178 and lysine 186 each participate in a glycyl lysine isopeptide (Lys-Gly) (interchain with G-Cter in ubiquitin) cross-link. Residues aspartate 259–valine 405 enclose the MATH domain.

In terms of assembly, homotrimer. Heterotrimer with TRAF2. Interacts with TNFRSF1A/TNFR1, TNFRSF1B/TNFR2, TNFRSF4, TNFRSF5/CD40, TNFRSF8/CD30, TNFRSF9/CD137, TNFRSF11A/RANK, TNFRSF13C, TNFRSF18/AITR, TNFRSF17/BCMA, TNFRSF19/TROY, TNFRSF19L/RELT, XEDAR, EDAR, Epstein-Barr virus BNFL1/LMP-1, TANK/ITRAF, TRAIP and RIPK2. Interacts with BIRC2 and BIRC3 N-terminus; a single BIRC2 or BIRC3 molecule interacts with a heterotrimer formed by TRAF1 and TRAF2. Interacts with MAP3K14. Interacts with NFATC2IP, TRAFD1 and with HIVEP3. Interacts with GPS2. Polyubiquitinated by BIRC2 and/or BIRC3, leading to its subsequent proteasomal degradation. Ubiquitinated by the SCF(FBXL2) complex, leading to its degradation by the proteasome.

It localises to the cytoplasm. Adapter molecule that regulates the activation of NF-kappa-B and JNK. Plays a role in the regulation of cell survival and apoptosis. The heterotrimer formed by TRAF1 and TRAF2 is part of a E3 ubiquitin-protein ligase complex that promotes ubiquitination of target proteins, such as MAP3K14. The TRAF1/TRAF2 complex recruits the antiapoptotic E3 protein-ubiquitin ligases BIRC2 and BIRC3 to TNFRSF1B/TNFR2. The sequence is that of TNF receptor-associated factor 1 (Traf1) from Mus musculus (Mouse).